We begin with the raw amino-acid sequence, 477 residues long: Pup--protein ligase (477 aa).

Position 16 (E16) interacts with Mg(2+). R60 contacts ATP. Y62 lines the Mg(2+) pocket. D64 (proton acceptor) is an active-site residue. E70 lines the Mg(2+) pocket. T73 and W441 together coordinate ATP.

The protein belongs to the Pup ligase/Pup deamidase family. Pup-conjugating enzyme subfamily.

It carries out the reaction ATP + [prokaryotic ubiquitin-like protein]-L-glutamate + [protein]-L-lysine = ADP + phosphate + N(6)-([prokaryotic ubiquitin-like protein]-gamma-L-glutamyl)-[protein]-L-lysine.. It participates in protein degradation; proteasomal Pup-dependent pathway. The protein operates within protein modification; protein pupylation. Functionally, catalyzes the covalent attachment of the prokaryotic ubiquitin-like protein modifier Pup to the proteasomal substrate proteins, thereby targeting them for proteasomal degradation. This tagging system is termed pupylation. The ligation reaction involves the side-chain carboxylate of the C-terminal glutamate of Pup and the side-chain amino group of a substrate lysine. The sequence is that of Pup--protein ligase from Corynebacterium kroppenstedtii (strain DSM 44385 / JCM 11950 / CIP 105744 / CCUG 35717).